A 162-amino-acid polypeptide reads, in one-letter code: Fibroblast growth factor 22 (162 aa).

Positions Met-1–Gly-22 are cleaved as a signal peptide.

Belongs to the heparin-binding growth factors family. As to quaternary structure, interacts with FGFR1 and FGFR2. Interacts with FGFBP1. As to expression, preferentially expressed in skin; low expression in brain. Expressed in the inner root sheath of the hair follicle.

The protein resides in the secreted. In terms of biological role, plays a role in the fasting response, glucose homeostasis, lipolysis and lipogenesis. Can stimulate cell proliferation (in vitro). May be involved in hair development. This chain is Fibroblast growth factor 22 (Fgf22), found in Mus musculus (Mouse).